The sequence spans 336 residues: Terephthalate 1,2-dioxygenase, reductase component 1 (336 aa).

Positions H3–R91 constitute a 2Fe-2S ferredoxin-type domain. [2Fe-2S] cluster-binding residues include C37, C42, C45, and C75. An FAD-binding FR-type domain is found at R98 to K197.

In terms of assembly, monomer. Part of a multicomponent enzyme system composed of a reductase (TphA1I or TphA1II) and a two-subunit oxygenase component (TphA2I or TphA2II and TphA3I or TphA3II). FAD serves as cofactor. The cofactor is [2Fe-2S] cluster.

It carries out the reaction terephthalate + NADH + O2 + H(+) = (3S,4R)-3,4-dihydroxycyclohexa-1,5-diene-1,4-dicarboxylate + NAD(+). Component of the terephthalate 1,2-dioxygenase multicomponent enzyme system which catalyzes the dioxygenation of terephthalate (TER/TPA) to 1,2-dihydroxy-3,5-cyclohexadiene-1,4-dicarboxylic acid (DCD). TphA1 probably reduces TphA2A3. It can also use 2,5-dicarboxypyridine (PDC) and 1,4-napthalenedicarboxylic acid (NDC) as substrates, and preferentially uses NADPH which is the physiological electron donor. The sequence is that of Terephthalate 1,2-dioxygenase, reductase component 1 (tphA1I) from Comamonas sp.